Here is a 184-residue protein sequence, read N- to C-terminus: Photosystem I assembly protein Ycf4 (184 aa).

2 helical membrane-spanning segments follow: residues phenylalanine 22 to serine 42 and isoleucine 57 to serine 77.

Belongs to the Ycf4 family.

Its subcellular location is the plastid. The protein resides in the chloroplast thylakoid membrane. In terms of biological role, seems to be required for the assembly of the photosystem I complex. The protein is Photosystem I assembly protein Ycf4 of Lepidium virginicum (Virginia pepperweed).